The following is a 300-amino-acid chain: ETS homologous factor (300 aa).

Residues 29 to 115 enclose the PNT domain; sequence STCNVSSGFF…SNLQHLKWNG (87 aa). A disordered region spans residues 183 to 202; that stretch reads ESPDMKKEQDPPAKCHTKKH. Positions 185 to 195 are enriched in basic and acidic residues; it reads PDMKKEQDPPA. Residues 207–289 constitute a DNA-binding region (ETS); that stretch reads THLWEFIRDI…DGRRLVYKFG (83 aa).

It belongs to the ETS family.

It is found in the nucleus. Transcriptional activator that may play a role in regulating epithelial cell differentiation and proliferation. May act as a repressor for a specific subset of ETS/AP-1-responsive genes, and as a modulator of the nuclear response to mitogen-activated protein kinase signaling cascades. Binds to DNA sequences containing the consensus nucleotide core sequence GGAA. Involved in regulation of TNFRSF10B/DR5 expression through Ets-binding sequences on the TNFRSF10B/DR5 promoter. This Pan paniscus (Pygmy chimpanzee) protein is ETS homologous factor (EHF).